Here is a 96-residue protein sequence, read N- to C-terminus: SAGA complex subunit SUS1 (96 aa).

Residue K68 forms a Glycyl lysine isopeptide (Lys-Gly) (interchain with G-Cter in ubiquitin) linkage.

Belongs to the ENY2 family. Component of the 1.8 MDa SAGA (Spt-Ada-Gcn5 acetyltransferase) complex, which is composed of 19 subunits TRA1, SPT7, TAF5, NGG1/ADA3, SGF73, SPT20/ADA5, SPT8, TAF12, TAF6, HFI1/ADA1, UBP8, GCN5, ADA2, SPT3, SGF29, TAF10, TAF9, SGF11 and SUS1. The SAGA complex is composed of 4 modules, namely the HAT (histone acetyltransferase) module (GCN5, ADA2, NGG1/ADA3 and SGF29), the DUB (deubiquitinating) module (UBP8, SGF11, SGF73 and SUS1), the core or TAF (TBP-associated factor) module (TAF5, TAF6, TAF9, TAF10 and TAF12), and the Tra1 or SPT (Suppressor of Ty) module (TRA1, HFI1/ADA1, SPT3, SPT7, SPT8 and SPT20/ADA5). The Tra1/SPT module binds activators, the core module recruits TBP (TATA-binding protein), the HAT module contains the histone H3 acetyltransferase GCN5, and the DUB module comprises the histone H2B deubiquitinase UBP8. Also identified in an altered form of SAGA, named SALSA (SAGA altered, Spt8 absent) or SLIK (SAGA-like) complex, which contains a C-terminal truncated form of SPT7 and is missing SPT8. However, it has been shown that the SAGA and SAGA-like SALSA/SLIK transcriptional coactivators are structurally and biochemically equivalent. Component of the nuclear pore complex (NPC)-associated TREX-2 complex (transcription and export complex 2), composed of at least SUS1, SAC3, THP1, SEM1, and CDC31. TREX-2 contains 2 SUS1 chains. The TREX-2 complex interacts with the mRNA export factors MEX67, MTR2 and SUB2, and the nucleoporin NUP1. Interacts directly with THP1, SAC3. Interacts directly with SGF11 and UBP8. Interacts with YRA1, MEX67 and with the RNA polymerase II.

The protein resides in the nucleus. It localises to the nucleoplasm. It is found in the cytoplasm. The protein localises to the P-body. Functionally, involved in mRNA export coupled transcription activation by association with both the TREX-2 and the SAGA complexes. SAGA acts as a general cofactor required for essentially all RNA polymerase II transcription. At the promoters, SAGA is required for transcription pre-initiation complex (PIC) recruitment. It influences RNA polymerase II transcriptional activity through different activities such as TBP interaction (via core/TAF module) and promoter selectivity, interaction with transcription activators (via Tra1/SPT module), and chromatin modification through histone acetylation (via HAT module) and deubiquitination (via DUB module). SAGA preferentially acetylates histones H3 (to form H3K9ac, H3K14ac, H3K18ac and H3K23ac) and H2B and deubiquitinates histone H2B. SAGA interacts with DNA via upstream activating sequences (UASs). Also identified in a modified version of SAGA named SALSA or SLIK. The cleavage of SPT7 and the absence of the SPT8 subunit in SLIK neither drive any major conformational differences in its structure compared with SAGA, nor significantly affect HAT, DUB, or DNA-binding activities. Within the SAGA complex, participates in a subcomplex with SGF11, SGF73 and UBP8 required for deubiquitination of H2B and for the maintenance of steady-state H3 methylation levels. The TREX-2 complex functions in docking export-competent ribonucleoprotein particles (mRNPs) to the nuclear entrance of the nuclear pore complex (nuclear basket), by association with components of the nuclear mRNA export machinery (MEX67-MTR2 and SUB2) in the nucleoplasm and the nucleoporin NUP1 at the nuclear basket. TREX-2 participates in mRNA export and accurate chromatin positioning in the nucleus by tethering genes to the nuclear periphery. SUS1 also has a role in mRNP biogenesis and maintenance of genome integrity through preventing RNA-mediated genome instability. Has a role in response to DNA damage induced by methyl methane sulfonate (MMS) and replication arrest induced by hydroxyurea. May also be involved in cytoplasmic mRNA decay by interaction with components of P-bodies. In Saccharomyces cerevisiae (strain ATCC 204508 / S288c) (Baker's yeast), this protein is SAGA complex subunit SUS1.